We begin with the raw amino-acid sequence, 643 residues long: Clathrin interactor 1 (643 aa).

Residues 16–149 (NVVMNYSEIE…QDDDRLREER (134 aa)) form the ENTH domain. Arg29 contacts a 1,2-diacyl-sn-glycero-3-phospho-(1D-myo-inositol-4,5-bisphosphate). The interaction with VTI1B stretch occupies residues 52-54 (FMY). An a 1,2-diacyl-sn-glycero-3-phospho-(1D-myo-inositol-4,5-bisphosphate)-binding site is contributed by Arg67. 2 interaction with VTI1B regions span residues 94–96 (SER) and 142–153 (DDRLREERKKAK). 8 positions are modified to phosphoserine: Ser163, Ser166, Ser173, Ser205, Ser210, Ser227, Ser245, and Ser299. The interval 219 to 331 (FRRKDREDSP…SSGDLVDLFD (113 aa)) is disordered. The segment covering 222–239 (KDREDSPERCSDSDEEKK) has biased composition (basic and acidic residues). Polar residues predominate over residues 300-310 (PDQNASTHTPQ). Residue Thr308 is modified to Phosphothreonine. Residues 311–323 (SSLKTSVPSSKSS) show a composition bias toward low complexity. A phosphoserine mark is found at Ser312 and Ser642.

Belongs to the epsin family. As to quaternary structure, binds clathrin heavy chain and AP-2. Interacts with VTI1B. Interacts with GGA2 (via GAE domain). Interacts with AP1G1 (via GAE domain). Interacts with AP1G2 (via GAE domain).

The protein resides in the cytoplasm. It is found in the perinuclear region. The protein localises to the membrane. Its subcellular location is the cytoplasmic vesicle. It localises to the clathrin-coated vesicle. Functionally, binds to membranes enriched in phosphatidylinositol 4,5-bisphosphate (PtdIns(4,5)P2). May have a role in transport via clathrin-coated vesicles from the trans-Golgi network to endosomes. Stimulates clathrin assembly. This is Clathrin interactor 1 (CLINT1) from Bos taurus (Bovine).